An 883-amino-acid polypeptide reads, in one-letter code: Serine/threonine-protein phosphatase BSL1 homolog (883 aa).

Kelch repeat units lie at residues 64–113 (ASSG…AVGT), 221–271 (MLLL…VFVG), 273–323 (RLHV…DHDA), and 341–387 (QIYI…NRNH). Disordered regions lie at residues 381–402 (ENQNRNHNFNSDSPTTNNSTDK), 430–466 (SHASSEDSLSEGIGSESPLSETSPMPEDLDDGGSLEP), and 499–525 (NESRRMHPSSNDQSYPAKKALNRQRSP). Polar residues predominate over residues 385–399 (RNHNFNSDSPTTNNS). 4 residues coordinate Mn(2+): aspartate 586, histidine 588, aspartate 620, and asparagine 652. The Proton donor role is filled by histidine 653. Mn(2+)-binding residues include histidine 705 and histidine 784. Residues 861 to 883 (QRPPTPTRGRPQSASDRNSLAYI) form a disordered region. Polar residues predominate over residues 872–883 (QSASDRNSLAYI).

It belongs to the PPP phosphatase family. BSU subfamily. As to quaternary structure, interacts with the phosphorylated form of BSK3. Mn(2+) is required as a cofactor.

Its subcellular location is the nucleus. The enzyme catalyses O-phospho-L-seryl-[protein] + H2O = L-seryl-[protein] + phosphate. It catalyses the reaction O-phospho-L-threonyl-[protein] + H2O = L-threonyl-[protein] + phosphate. This Oryza sativa subsp. japonica (Rice) protein is Serine/threonine-protein phosphatase BSL1 homolog (BSL1).